We begin with the raw amino-acid sequence, 136 residues long: Large ribosomal subunit protein bL17 (136 aa).

The protein belongs to the bacterial ribosomal protein bL17 family. As to quaternary structure, part of the 50S ribosomal subunit. Contacts protein L32.

This Rickettsia peacockii (strain Rustic) protein is Large ribosomal subunit protein bL17.